A 987-amino-acid chain; its full sequence is MTMAGGRKGLVAPQNTFLENIVRRSNDTNFVLGNAQIVDWPIVYSNDGFCKLSGYHRAEVMQKSSTCSFMYGELTDKDTIEKVRQTFENYEMNSFEILMYKKNRTPVWFFVKIAPIRNEQDKVVLFLCTFSDITAFKQPIEDDSCKGWGKFARLTRALTSSRGVLQQLAPSVQKGENVHKHSRLAEVLQLGSDILPQYKQEAPKTPPHIILHYCVFKTTWDWIILILTFYTAILVPYNVSFKTRQNNVAWLVVDSIVDVIFLVDIVLNFHTTFVGPAGEVISDPKLIRMNYLKTWFVIDLLSCLPYDVINAFENVDEVSAFMGDPGKIGFADQIPPPLEGRESQGISSLFSSLKVVRLLRLGRVARKLDHYIEYGAAVLVLLVCVFGLAAHWMACIWYSIGDYEIFDEDTKTIRNNSWLYQLAMDIGTPYQFNGSGSGKWEGGPSKNSVYISSLYFTMTSLTSVGFGNIAPSTDIEKIFAVAIMMIGSLLYATIFGNVTTIFQQMYANTNRYHEMLNSVRDFLKLYQVPKGLSERVMDYIVSTWSMSRGIDTEKVLQICPKDMRADICVHLNRKVFKEHPAFRLASDGCLRALAMEFQTVHCAPGDLIYHAGESVDSLCFVVSGSLEVIQDDEVVAILGKGDVFGDVFWKEATLAQSCANVRALTYCDLHVIKRDALQKVLEFYTAFSHSFSRNLILTYNLRKRIVFRKISDVKREEEERMKRKNEAPLILPPDHPVRRLFQRFRQQKEARLAAERGGRDLDDLDVEKGSVLTEHSHHGLAKASVVTVRESPATPVAFPAAAAPAGLDHARLQAPGAEGLGPKAGGADCAKRKGWARFKDACGQAEDWSKVSKAESMETLPERTKAAGEATLKKTDSCDSGITKSDLRLDNVGEARSPQDRSPILAEVKHSFYPIPEQTLQAAVLEVKHELKEDIKALSTKMTSIEKQLSEILRILTSRRSSQSPQELFEISRPQSPESERDIFGAS.

The Cytoplasmic segment spans residues 1-220; the sequence is MTMAGGRKGL…LHYCVFKTTW (220 aa). Positions 14–94 constitute a PAS domain; sequence QNTFLENIVR…QTFENYEMNS (81 aa). The 53-residue stretch at 93-145 folds into the PAC domain; it reads NSFEILMYKKNRTPVWFFVKIAPIRNEQDKVVLFLCTFSDITAFKQPIEDDSC. The interval 151–162 is required for phosphatidylinositol bisphosphate binding; sequence FARLTRALTSSR. The helical transmembrane segment at 221-241 threads the bilayer; sequence DWIILILTFYTAILVPYNVSF. Residues 242 to 248 lie on the Extracellular side of the membrane; sequence KTRQNNV. A helical transmembrane segment spans residues 249–269; that stretch reads AWLVVDSIVDVIFLVDIVLNF. At 270 to 290 the chain is on the cytoplasmic side; it reads HTTFVGPAGEVISDPKLIRMN. Residues 291–309 traverse the membrane as a helical segment; it reads YLKTWFVIDLLSCLPYDVI. Residues 310–345 are Extracellular-facing; sequence NAFENVDEVSAFMGDPGKIGFADQIPPPLEGRESQG. A helical; Voltage-sensor membrane pass occupies residues 346 to 368; sequence ISSLFSSLKVVRLLRLGRVARKL. Topologically, residues 369 to 377 are cytoplasmic; sequence DHYIEYGAA. The helical transmembrane segment at 378-399 threads the bilayer; the sequence is VLVLLVCVFGLAAHWMACIWYS. At 400–448 the chain is on the extracellular side; it reads IGDYEIFDEDTKTIRNNSWLYQLAMDIGTPYQFNGSGSGKWEGGPSKNS. 2 N-linked (GlcNAc...) asparagine glycosylation sites follow: asparagine 415 and asparagine 433. Positions 449–470 form an intramembrane region, pore-forming; the sequence is VYISSLYFTMTSLTSVGFGNIA. Positions 463-468 match the Selectivity filter motif; the sequence is SVGFGN. Topologically, residues 471-477 are extracellular; sequence PSTDIEK. The helical transmembrane segment at 478-498 threads the bilayer; sequence IFAVAIMMIGSLLYATIFGNV. At 499–987 the chain is on the cytoplasmic side; the sequence is TTIFQQMYAN…ESERDIFGAS (489 aa). The interval 673 to 770 is calmodulin-binding; it reads KRDALQKVLE…LDDLDVEKGS (98 aa). The interaction with cyclic nucleotide-binding pocket stretch occupies residues 699–701; sequence YNL. The CAD (involved in subunit assembly) stretch occupies residues 922-962; it reads AAVLEVKHELKEDIKALSTKMTSIEKQLSEILRILTSRRSS. The segment at 960 to 987 is disordered; that stretch reads RSSQSPQELFEISRPQSPESERDIFGAS. Residues serine 972, serine 976, and serine 979 each carry the phosphoserine modification. Residues 978–987 show a composition bias toward basic and acidic residues; that stretch reads ESERDIFGAS.

This sequence belongs to the potassium channel family. H (Eag) (TC 1.A.1.20) subfamily. Kv10.1/KCNH1 sub-subfamily. Homomultimer. The potassium channel is composed of a homo- or heterotetrameric complex of pore-forming alpha subunits that can associate with modulating beta subunits. Heteromultimer with KCNH5/EAG2. Interacts with ALG10B. Interacts with RABEP1. Interacts (via C-terminus) with CTTN. Interacts (via C-terminal cytoplasmic region) with Ca(2+)-bound calmodulin. In terms of processing, channel activity is regulated via tyrosine phosphorylation/dephosphorylation by SRC and PTPN6. Detected in cerebellum, cortex and retina.

The protein resides in the cell membrane. The protein localises to the nucleus inner membrane. It localises to the cell projection. It is found in the dendrite. Its subcellular location is the axon. The protein resides in the presynaptic cell membrane. The protein localises to the perikaryon. It localises to the postsynaptic density membrane. It is found in the early endosome membrane. The enzyme catalyses K(+)(in) = K(+)(out). With respect to regulation, channel activity is inhibited by interaction with Ca(2+)-bound calmodulin. Interaction of a single pore-forming alpha subunit with a calmodulin chain is sufficient to promote channel closure. Extracellular magnesium ion concentrations up to 4 mM modulate channel activity by slowing down current activation in a reversible fashion. Channel activity is not regulated by cyclic nucleotides. Channel activity is inhibited by binding intracellular phosphatidylinositol-3,5-bisphosphate and phosphatidylinositol-4,5-bisphosphate (PIP2), but is not inhibited by phosphatidylinositol 4-phosphate. In terms of biological role, pore-forming (alpha) subunit of a voltage-gated delayed rectifier potassium channel that mediates outward-rectifying potassium currents which, on depolarization, reaches a steady-state level and do not inactivate. The activation kinetics depend on the prepulse potential and external divalent cation concentration. With negative prepulses, the current activation is delayed and slowed down several fold, whereas more positive prepulses speed up activation. The time course of activation is biphasic with a fast and a slowly activating current component. Activates at more positive membrane potentials and exhibit a steeper activation curve. Channel properties are modulated by subunit assembly. Mediates IK(NI) current in myoblasts. Involved in the regulation of cell proliferation and differentiation, in particular adipogenic and osteogenic differentiation in bone marrow-derived mesenchymal stem cells (MSCs). The polypeptide is Voltage-gated delayed rectifier potassium channel KCNH1 (Bos taurus (Bovine)).